The sequence spans 396 residues: 8-amino-7-oxononanoate synthase (396 aa).

R19 contacts substrate. 106–107 lines the pyridoxal 5'-phosphate pocket; the sequence is GY. A substrate-binding site is contributed by H131. Positions 176, 204, and 233 each coordinate pyridoxal 5'-phosphate. K236 is subject to N6-(pyridoxal phosphate)lysine. Residue T350 coordinates substrate.

It belongs to the class-II pyridoxal-phosphate-dependent aminotransferase family. BioF subfamily. Homodimer. Requires pyridoxal 5'-phosphate as cofactor.

It catalyses the reaction 6-carboxyhexanoyl-[ACP] + L-alanine + H(+) = (8S)-8-amino-7-oxononanoate + holo-[ACP] + CO2. It functions in the pathway cofactor biosynthesis; biotin biosynthesis. In terms of biological role, catalyzes the decarboxylative condensation of pimeloyl-[acyl-carrier protein] and L-alanine to produce 8-amino-7-oxononanoate (AON), [acyl-carrier protein], and carbon dioxide. The protein is 8-amino-7-oxononanoate synthase of Pseudomonas syringae pv. syringae (strain B728a).